The following is a 65-amino-acid chain: uncharacterized protein (65 aa).

Residues 1–20 (MRFSNCFNKFKFCIGTEKKY) are Cytoplasmic-facing. The chain crosses the membrane as a helical span at residues 21–43 (SFPICTSTYTSFSLFACIWSIFI). Over 44–65 (HISLNKSFIYQKSWYYSFFQNR) the chain is Extracellular.

The protein localises to the host membrane. This is an uncharacterized protein from Acidianus sp. F28 (AFV-2).